The chain runs to 187 residues: Phosphatidylethanolamine-binding protein 1 (187 aa).

S13 bears the Phosphoserine mark. T42 carries the phosphothreonine modification. Residues S52, S98, and S153 each carry the phosphoserine modification. The interval 93–134 is interaction with RAF1; it reads KGNDISSGTVLSDYVGSGPPKGTGLHRYVWLVYEQSGPLKCD.

Belongs to the phosphatidylethanolamine-binding protein family. Has a tendency to form dimers by disulfide cross-linking. Interacts with RAF1 and this interaction is enhanced if RAF1 is phosphorylated on residues 'Ser-338', 'Ser-339', 'Tyr-340' and 'Tyr-341'. Interacts with ALOX15; in response to IL13/interleukin-13, prevents the interaction of PEBP1 with RAF1 to activate the ERK signaling cascade.

It localises to the cytoplasm. Functionally, binds ATP, opioids and phosphatidylethanolamine. Has lower affinity for phosphatidylinositol and phosphatidylcholine. Serine protease inhibitor which inhibits thrombin, neuropsin and chymotrypsin but not trypsin, tissue type plasminogen activator and elastase. Involved in the positive regulation of epithelial cell migration. Inhibits the kinase activity of RAF1 by inhibiting its activation and by dissociating the RAF1/MEK complex and acting as a competitive inhibitor of MEK phosphorylation. In terms of biological role, HCNP may be involved in the function of the presynaptic cholinergic neurons of the central nervous system. HCNP increases the production of choline acetyltransferase but not acetylcholinesterase. Seems to be mediated by a specific receptor. The protein is Phosphatidylethanolamine-binding protein 1 (PEBP1) of Canis lupus familiaris (Dog).